The chain runs to 1083 residues: MSSDASLRVVVRARPMNGRETKEGASRCVQFYENTKQIVINESATFTFDAVFADTSDQESVYETTALPLLDRIFAGFNATVLAYGQTGSGKTYTMGTEDNVGTDEMRRGIIPRLVSALFQRIMNTEAPESFAVTVSMFEVYGDNVYDLLRPDKVKLNVHGDEKNCTVVNLTAVPVIDLKGALKQLAVGCHYRTKAETAMNAMSSRSHAVFTVFVEKTATAECDSAFSAKLQLVDLAGSERLKKTEAEGNRMKEGININGGLLILSQVIAALATKQKHIPYRNSVITRVLQDSLGGNSFTVFLACISPADSNSQETLNTLRYADRAKQIKNKPIVNKNPKAEEIAILQAQLKRLQKENADLKQGIAPAEVRFNDANNSAEILSLKEEVVRKTEQLKERAMKQSECIIRMSALTQKNSRLEEDKAKLQSMLTDVRNTVLNEEMLDAAEVVRSIQQVVGDTEESTTLADDDNDETALGGQDDTIYDTERLPELQAELDDLEKQIAMKDENRQKALDEQRAFIEAMQQRESEKTQLVVRISELETEMNKLRQEGKKVTTAAKLAEERRQKLKDLERQHAEDKKVLNDMKKLQETRRRMEETLKKTEDELKNLKTQRLRLLREQRAEASKFQAFKQKHEREMAQMKSKLQKRENDVAIQKRMTDQKLTVLQMRLTEANRANKTLRELNLKRANRKSSPTNASALQNMIEEELEHEMCAQRSHWLCEDLRRQRHDLMQNINTVESMKFEGGKRRRISASADPNVSVVIEGEEEFEVKRQKELTFLRASLETLNEEIKDSLRNETIAGNEERANSRWEKVPAEMRPAFEAVYAQAVAHIRKEIELEFKLARTKSEFTAKIASKASHEEKRKKEDEEMRAKYRELAQCLEDAKSGLHEKIAFLLCLIKENRVDENAIQQFESLKNQFCDVEQKVKKASRRKTTNFMGGLTPKPELQRNERARRAVKYYGNVVNSEDVTMDDSRHQKRKDHSLLAVEMNRTTDDNVKRRVAMSPIKCDDDTRLTEEDEDIENEAMNNATFVKDSFNSATIVLDDSQPSPSNSTFVIGAAPTSEADGVPPIKRKSRRTDLGPL.

The Kinesin motor domain occupies 6 to 328; sequence SLRVVVRARP…LRYADRAKQI (323 aa). 85-92 is an ATP binding site; the sequence is GQTGSGKT. The stretch at 408-435 forms a coiled coil; sequence MSALTQKNSRLEEDKAKLQSMLTDVRNT. Over residues 458–471 the composition is skewed to acidic residues; that stretch reads TEESTTLADDDNDE. Residues 458-479 form a disordered region; the sequence is TEESTTLADDDNDETALGGQDD. Residues 487-650 are a coiled coil; sequence LPELQAELDD…KSKLQKREND (164 aa). A compositionally biased stretch (polar residues) spans 1044-1055; it reads DDSQPSPSNSTF. The disordered stretch occupies residues 1044–1083; it reads DDSQPSPSNSTFVIGAAPTSEADGVPPIKRKSRRTDLGPL.

This sequence belongs to the TRAFAC class myosin-kinesin ATPase superfamily. Kinesin family. In terms of tissue distribution, expressed in the gonad.

The protein localises to the nucleus. It localises to the nucleoplasm. Its subcellular location is the cytoplasm. The protein resides in the cytoskeleton. It is found in the spindle. The protein localises to the chromosome. Functionally, required for chromosome movement and orientation on spindle poles in mitosis and meiosis. May play a role in early anterior-posterior chromosome movement in mitotic embryos. In Caenorhabditis elegans, this protein is Kinesin-like protein klp-19.